The sequence spans 230 residues: Ion-translocating oxidoreductase complex subunit E (230 aa).

The next 6 membrane-spanning stretches (helical) occupy residues Ala18–Ala38, Leu39–Leu59, Thr63–Val83, Leu86–Val106, Trp125–Leu145, and Pro182–Val202.

It belongs to the NqrDE/RnfAE family. As to quaternary structure, the complex is composed of six subunits: RsxA, RsxB, RsxC, RsxD, RsxE and RsxG.

The protein localises to the cell inner membrane. Part of a membrane-bound complex that couples electron transfer with translocation of ions across the membrane. Required to maintain the reduced state of SoxR. This Salmonella arizonae (strain ATCC BAA-731 / CDC346-86 / RSK2980) protein is Ion-translocating oxidoreductase complex subunit E.